Consider the following 291-residue polypeptide: Pyridoxal 5'-phosphate synthase subunit PdxS (291 aa).

Position 23 (aspartate 23) interacts with D-ribose 5-phosphate. The Schiff-base intermediate with D-ribose 5-phosphate role is filled by lysine 80. Glycine 152 serves as a coordination point for D-ribose 5-phosphate. Residue arginine 164 coordinates D-glyceraldehyde 3-phosphate. D-ribose 5-phosphate is bound by residues glycine 213 and 234–235 (GS).

This sequence belongs to the PdxS/SNZ family. As to quaternary structure, in the presence of PdxT, forms a dodecamer of heterodimers.

It catalyses the reaction aldehydo-D-ribose 5-phosphate + D-glyceraldehyde 3-phosphate + L-glutamine = pyridoxal 5'-phosphate + L-glutamate + phosphate + 3 H2O + H(+). Its pathway is cofactor biosynthesis; pyridoxal 5'-phosphate biosynthesis. Functionally, catalyzes the formation of pyridoxal 5'-phosphate from ribose 5-phosphate (RBP), glyceraldehyde 3-phosphate (G3P) and ammonia. The ammonia is provided by the PdxT subunit. Can also use ribulose 5-phosphate and dihydroxyacetone phosphate as substrates, resulting from enzyme-catalyzed isomerization of RBP and G3P, respectively. The chain is Pyridoxal 5'-phosphate synthase subunit PdxS from Haemophilus influenzae (strain PittGG).